The primary structure comprises 314 residues: Replication initiation protein (314 aa).

The segment covering 1-10 has biased composition (polar residues); sequence MSKNNHANHS. A disordered region spans residues 1-25; it reads MSKNNHANHSNHLENHDLDNFSKTG. Residues 11–20 show a composition bias toward basic and acidic residues; it reads NHLENHDLDN.

This sequence belongs to the plasmid replication initiation factor family.

Its function is as follows. This protein is probably a specific topoisomerase involved in initiating replication. This protein is specifically required and may be rate-limiting for replication of the plasmid in vivo. This is Replication initiation protein (repN) from Staphylococcus aureus.